Reading from the N-terminus, the 994-residue chain is Chromatin modification-related protein vid21 (994 aa).

2 disordered regions span residues proline 122–valine 275 and proline 288–valine 308. Basic and acidic residues-rich tracts occupy residues threonine 158 to isoleucine 171, lysine 178 to glycine 191, leucine 204 to glutamate 233, valine 254 to serine 265, and proline 288 to glutamate 305. 2 positions are modified to phosphoserine: serine 298 and serine 378. Residues proline 475–glutamate 548 enclose the HSA domain. The interval serine 671 to asparagine 693 is disordered. The span at phenylalanine 672 to asparagine 693 shows a compositional bias: basic and acidic residues. The 61-residue stretch at lysine 713 to aspartate 773 folds into the Myb-like domain. 2 disordered regions span residues threonine 857–leucine 880 and glutamate 975–glutamine 994. Positions leucine 880–leucine 912 form a coiled coil.

It belongs to the EAF1 family. Component of the NuA4 histone acetyltransferase complex.

The protein resides in the nucleus. Functionally, component of the NuA4 histone acetyltransferase complex which is involved in transcriptional activation of selected genes principally by acetylation of nucleosomal histone H4 and H2A. The NuA4 complex is also involved in DNA repair. The protein is Chromatin modification-related protein vid21 (vid21) of Schizosaccharomyces pombe (strain 972 / ATCC 24843) (Fission yeast).